A 241-amino-acid polypeptide reads, in one-letter code: DNA repair protein RecO (241 aa).

This sequence belongs to the RecO family.

Its function is as follows. Involved in DNA repair and RecF pathway recombination. The chain is DNA repair protein RecO from Orientia tsutsugamushi (strain Ikeda) (Rickettsia tsutsugamushi).